Consider the following 465-residue polypeptide: Type II restriction enzyme BsuMI component YdjA (465 aa).

In terms of assembly, bsuMI restriction activity requires YdiR, YdiS and YdjA.

The catalysed reaction is Endonucleolytic cleavage of DNA to give specific double-stranded fragments with terminal 5'-phosphates.. In terms of biological role, a P subtype restriction enzyme that recognizes the double-stranded sequence 5'-CTCGAG-3'; the cleavage site is unknown. In Bacillus subtilis (strain 168), this protein is Type II restriction enzyme BsuMI component YdjA (ydjA).